The chain runs to 629 residues: RNA polymerase sigma factor RpoD (629 aa).

The tract at residues 183-228 (HNGLDEDFSDEDDEEESSNADVEDNEDEEDNESESTSDSSDSDNSI) is disordered. A compositionally biased stretch (acidic residues) spans 187-228 (DEDFSDEDDEEESSNADVEDNEDEEDNESESTSDSSDSDNSI). Residues 395-465 (MVEANLRLVI…TRSIADQART (71 aa)) form a sigma-70 factor domain-2 region. The short motif at 419–422 (DLIQ) is the Interaction with polymerase core subunit RpoC element. Residues 474–550 (ETINKLNRIS…DSTLELPLDS (77 aa)) form a sigma-70 factor domain-3 region. Residues 563–616 (VLEGLTPREAKVLRMRFGIDMNTDHTLEEVGKQFDVTRERIRQIEAKALRKLRH) are sigma-70 factor domain-4. The segment at residues 589–608 (LEEVGKQFDVTRERIRQIEA) is a DNA-binding region (H-T-H motif).

It belongs to the sigma-70 factor family. RpoD/SigA subfamily. Interacts transiently with the RNA polymerase catalytic core.

Its subcellular location is the cytoplasm. Functionally, sigma factors are initiation factors that promote the attachment of RNA polymerase to specific initiation sites and are then released. This sigma factor is the primary sigma factor during exponential growth. In Haemophilus influenzae (strain ATCC 51907 / DSM 11121 / KW20 / Rd), this protein is RNA polymerase sigma factor RpoD.